Reading from the N-terminus, the 274-residue chain is Kit ligand (274 aa).

The N-terminal stretch at 1-25 (MKKTQTWIITCIYLQLLLFNPLVRT) is a signal peptide. At Gln26 the chain carries Pyrrolidone carboxylic acid. Over 26–215 (QGICRNRVTD…SDSIEDSSLQ (190 aa)) the chain is Extracellular. Disulfide bonds link Cys29-Cys114 and Cys68-Cys164. 4 N-linked (GlcNAc...) asparagine glycosylation sites follow: Asn90, Asn97, Asn145, and Asn196. A helical membrane pass occupies residues 216 to 238 (WAAVALPAFFSLVIGFAFGALYW). At 239 to 274 (KKKQPNLTRTVENIQINEEDNEISMLQEKEREFQEV) the chain is on the cytoplasmic side.

Belongs to the SCF family. As to quaternary structure, homodimer, non-covalently linked. Heterotetramer with KIT, binding two KIT molecules; thereby mediates KIT dimerization and subsequent activation by autophosphorylation. Post-translationally, a soluble form is produced by proteolytic processing of the extracellular domain.

The protein localises to the cytoplasm. It is found in the cytoskeleton. Its subcellular location is the cell membrane. It localises to the cell projection. The protein resides in the lamellipodium. The protein localises to the filopodium. It is found in the secreted. Its function is as follows. Ligand for the receptor-type protein-tyrosine kinase KIT. Plays an essential role in the regulation of cell survival and proliferation, hematopoiesis, stem cell maintenance, gametogenesis, mast cell development, migration and function, and in melanogenesis. KITLG/SCF binding can activate several signaling pathways. Promotes phosphorylation of PIK3R1, the regulatory subunit of phosphatidylinositol 3-kinase, and subsequent activation of the kinase AKT1. KITLG/SCF and KIT also transmit signals via GRB2 and activation of RAS, RAF1 and the MAP kinases MAPK1/ERK2 and/or MAPK3/ERK1. KITLG/SCF and KIT promote activation of STAT family members STAT1, STAT3 and STAT5. KITLG/SCF and KIT promote activation of PLCG1, leading to the production of the cellular signaling molecules diacylglycerol and inositol 1,4,5-trisphosphate. KITLG/SCF acts synergistically with other cytokines, probably interleukins. This Sus scrofa (Pig) protein is Kit ligand (KITLG).